Here is a 295-residue protein sequence, read N- to C-terminus: MSSSRPVFRSRWLPYLLVAPQLIITVIFFIWPAGEALWYSLQSVDPFGFSSQFVGLDNFVTLFHDSYYLDAFWTTIKFSTFVTVSGLLVSLFFAALVEYIVRGSRFYQTLMLLPYAVAPAVAAVLWIFLFNPGRGLITHFLAEFGYDWNHAQNSGQAMFLVVFASVWKQISYNFLFFYAALQSIPRSLIEAAAIDGAGPIRRFFKIALPLIAPVSFFLLVVNLVYAFFDTFPVIDAATSGGPVQATTTLIYKIYREGFTGLDLASSAAQSVVLMFLVIVLTVVQFRYVESKVRYQ.

The Cytoplasmic segment spans residues 1 to 11 (MSSSRPVFRSR). Residues 12-32 (WLPYLLVAPQLIITVIFFIWP) traverse the membrane as a helical segment. Over 33–80 (AGEALWYSLQSVDPFGFSSQFVGLDNFVTLFHDSYYLDAFWTTIKFST) the chain is Periplasmic. The ABC transmembrane type-1 domain maps to 76-284 (IKFSTFVTVS…FLVIVLTVVQ (209 aa)). A helical transmembrane segment spans residues 81–101 (FVTVSGLLVSLFFAALVEYIV). The Cytoplasmic segment spans residues 102-109 (RGSRFYQT). A helical transmembrane segment spans residues 110–130 (LMLLPYAVAPAVAAVLWIFLF). The Periplasmic portion of the chain corresponds to 131-156 (NPGRGLITHFLAEFGYDWNHAQNSGQ). A helical membrane pass occupies residues 157-177 (AMFLVVFASVWKQISYNFLFF). Residues 178–207 (YAALQSIPRSLIEAAAIDGAGPIRRFFKIA) lie on the Cytoplasmic side of the membrane. Residues 208-228 (LPLIAPVSFFLLVVNLVYAFF) traverse the membrane as a helical segment. Topologically, residues 229-262 (DTFPVIDAATSGGPVQATTTLIYKIYREGFTGLD) are periplasmic. A helical transmembrane segment spans residues 263–283 (LASSAAQSVVLMFLVIVLTVV). The Cytoplasmic portion of the chain corresponds to 284-295 (QFRYVESKVRYQ).

It belongs to the binding-protein-dependent transport system permease family. UgpAE subfamily. The complex is composed of two ATP-binding proteins (UgpC), two transmembrane proteins (UgpA and UgpE) and a solute-binding protein (UgpB).

The protein resides in the cell inner membrane. Part of the ABC transporter complex UgpBAEC involved in sn-glycerol-3-phosphate (G3P) import. Probably responsible for the translocation of the substrate across the membrane. The polypeptide is sn-glycerol-3-phosphate transport system permease protein UgpA (ugpA) (Escherichia coli (strain UTI89 / UPEC)).